The sequence spans 359 residues: Centromere-binding protein 1 (359 aa).

Residues 1–262 (MSGKRSYQDD…SHKEVERRRR (262 aa)) are disordered. The span at 55–78 (KENKENRDGDKVGDDEHDVVKGES) shows a compositional bias: basic and acidic residues. Residues 120 to 161 (GDEDEDEDEEEEEDEDDHVDIDDVDKDPDAVIDEDDDEEDED) show a composition bias toward acidic residues. The span at 249 to 259 (QRKESHKEVER) shows a compositional bias: basic and acidic residues. The bHLH domain occupies 249–297 (QRKESHKEVERRRRQNINTAIEKLSDLLPVKETSKAAILSRAAEYIQKM).

As to quaternary structure, binds DNA as a dimer.

It localises to the nucleus. Its subcellular location is the chromosome. The protein localises to the centromere. In terms of biological role, required for chromosome stability and methionine prototrophy. It is involved in chromosomal segregation. Binds to a highly conserved DNA sequence (5'-RTCACRTG-3'), called CDEI, found in centromeres and in several promoters. The chain is Centromere-binding protein 1 (CBF1) from Kluyveromyces lactis (strain ATCC 8585 / CBS 2359 / DSM 70799 / NBRC 1267 / NRRL Y-1140 / WM37) (Yeast).